The sequence spans 28 residues: fur leader peptide (28 aa).

Its function is as follows. Cotranscribed with fur, it is essential for fur translation. The fur ribosomal binding site (RBS) is occluded by the 5'-mRNA secondary structure, which is opened by uof translation. This chain is fur leader peptide (uof), found in Escherichia coli (strain K12).